The chain runs to 2096 residues: HEAT repeat-containing protein 1 homolog (2096 aa).

The stretch at 2058-2096 (TVPFIAELLEDEHQRVEKNTRTGVQELETILGESVQKYL) is one HEAT repeat.

The protein belongs to the HEATR1/UTP10 family. As to quaternary structure, part of the small subunit (SSU) processome, composed of more than 70 proteins and the RNA chaperone small nucleolar RNA (snoRNA) U3. Interacts with MYC; the interaction is required for localization of MYC to the nucleolus.

Its subcellular location is the nucleus. It is found in the nucleolus. Ribosome biogenesis factor; required for recruitment of Myc to nucleoli. Involved in nucleolar processing of pre-18S ribosomal RNA. Required for optimal pre-ribosomal RNA transcription by RNA polymerase I. Part of the small subunit (SSU) processome, first precursor of the small eukaryotic ribosomal subunit. During the assembly of the SSU processome in the nucleolus, many ribosome biogenesis factors, an RNA chaperone and ribosomal proteins associate with the nascent pre-rRNA and work in concert to generate RNA folding, modifications, rearrangements and cleavage as well as targeted degradation of pre-ribosomal RNA by the RNA exosome. Involved in neuronal-lineage cell proliferation during larval development. The chain is HEAT repeat-containing protein 1 homolog from Drosophila melanogaster (Fruit fly).